A 199-amino-acid chain; its full sequence is Thymidylate kinase (199 aa).

7-14 (GIDGSGKS) is an ATP binding site.

The protein belongs to the thymidylate kinase family.

The enzyme catalyses dTMP + ATP = dTDP + ADP. Functionally, phosphorylation of dTMP to form dTDP in both de novo and salvage pathways of dTTP synthesis. The sequence is that of Thymidylate kinase from Thermosipho melanesiensis (strain DSM 12029 / CIP 104789 / BI429).